Reading from the N-terminus, the 167-residue chain is Lipoprotein signal peptidase (167 aa).

Helical transmembrane passes span 8-28 (TFLTLLLLASIDWVSKLVVLL), 46-66 (WGHFSFLIIPSFNEGAAFGLF), 68-88 (QYKIPLLIFRVCVILGLALFL), and 101-121 (VALTLILAGALGNVGDILLYG). Catalysis depends on residues Asp125 and Asp143. A helical membrane pass occupies residues 139 to 159 (FNLADAFISIGTLLLIGHLYF).

This sequence belongs to the peptidase A8 family.

The protein resides in the cell inner membrane. The catalysed reaction is Release of signal peptides from bacterial membrane prolipoproteins. Hydrolyzes -Xaa-Yaa-Zaa-|-(S,diacylglyceryl)Cys-, in which Xaa is hydrophobic (preferably Leu), and Yaa (Ala or Ser) and Zaa (Gly or Ala) have small, neutral side chains.. The protein operates within protein modification; lipoprotein biosynthesis (signal peptide cleavage). This protein specifically catalyzes the removal of signal peptides from prolipoproteins. The polypeptide is Lipoprotein signal peptidase (Chlamydia trachomatis serovar A (strain ATCC VR-571B / DSM 19440 / HAR-13)).